A 183-amino-acid chain; its full sequence is Inner membrane protein YgjV (183 aa).

Over 1–2 (MT) the chain is Periplasmic. A helical membrane pass occupies residues 3-23 (AYWLAQGVGVIAFLIGITTFF). Topologically, residues 24 to 38 (NRDERRFKKQLSVYS) are cytoplasmic. Residues 39–59 (AVIGVHFFLLGTYPAGASAIL) form a helical membrane-spanning segment. The Periplasmic segment spans residues 60-71 (NAIRTLITLRTR). The next 2 helical transmembrane spans lie at 72–92 (SLWV…AKFH) and 93–113 (HPVE…LFCC). Topologically, residues 114 to 133 (KGLTMRCVMWFSTCCWVIHN) are periplasmic. A helical membrane pass occupies residues 134–154 (FWAGSIGGTMIEGSFLLMNGL). At 155-183 (NIIRFWRMQKRGIDPFKVEKTPSAVDERG) the chain is on the cytoplasmic side.

The protein localises to the cell inner membrane. The protein is Inner membrane protein YgjV (ygjV) of Escherichia coli (strain K12).